Reading from the N-terminus, the 127-residue chain is Holo-[acyl-carrier-protein] synthase (127 aa).

Mg(2+) contacts are provided by Asp-7 and Glu-56.

Belongs to the P-Pant transferase superfamily. AcpS family. Requires Mg(2+) as cofactor.

Its subcellular location is the cytoplasm. The catalysed reaction is apo-[ACP] + CoA = holo-[ACP] + adenosine 3',5'-bisphosphate + H(+). Functionally, transfers the 4'-phosphopantetheine moiety from coenzyme A to a Ser of acyl-carrier-protein. The polypeptide is Holo-[acyl-carrier-protein] synthase (Onion yellows phytoplasma (strain OY-M)).